Reading from the N-terminus, the 137-residue chain is MNIDYVKSILPHRYPFLLVDGVIEESEDRIVAFKNISISDPVFQGHFPEYPIYPGVLIVEGLAQTAGILLLKSVEGIPLFLGIDEARFKKEVRPGDRLIYEVRKLGEKLGTVQVEGVAKVDDKIVAKARLLLGVKKK.

Residue His46 is part of the active site.

This sequence belongs to the thioester dehydratase family. FabZ subfamily.

The protein resides in the cytoplasm. It carries out the reaction a (3R)-hydroxyacyl-[ACP] = a (2E)-enoyl-[ACP] + H2O. Its function is as follows. Involved in unsaturated fatty acids biosynthesis. Catalyzes the dehydration of short chain beta-hydroxyacyl-ACPs and long chain saturated and unsaturated beta-hydroxyacyl-ACPs. This Thermotoga maritima (strain ATCC 43589 / DSM 3109 / JCM 10099 / NBRC 100826 / MSB8) protein is 3-hydroxyacyl-[acyl-carrier-protein] dehydratase FabZ.